The sequence spans 177 residues: ATP synthase subunit b, chloroplastic (177 aa).

A helical transmembrane segment spans residues 26-44 (IINLSIVLFVVIRFLGEAL).

This sequence belongs to the ATPase B chain family. In terms of assembly, F-type ATPases have 2 components, F(1) - the catalytic core - and F(0) - the membrane proton channel. F(1) has five subunits: alpha(3), beta(3), gamma(1), delta(1), epsilon(1). F(0) has four main subunits: a(1), b(1), b'(1) and c(10-14). The alpha and beta chains form an alternating ring which encloses part of the gamma chain. F(1) is attached to F(0) by a central stalk formed by the gamma and epsilon chains, while a peripheral stalk is formed by the delta, b and b' chains.

Its subcellular location is the plastid. The protein resides in the chloroplast thylakoid membrane. Its function is as follows. F(1)F(0) ATP synthase produces ATP from ADP in the presence of a proton or sodium gradient. F-type ATPases consist of two structural domains, F(1) containing the extramembraneous catalytic core and F(0) containing the membrane proton channel, linked together by a central stalk and a peripheral stalk. During catalysis, ATP synthesis in the catalytic domain of F(1) is coupled via a rotary mechanism of the central stalk subunits to proton translocation. Functionally, component of the F(0) channel, it forms part of the peripheral stalk, linking F(1) to F(0). This Bigelowiella natans (Pedinomonas minutissima) protein is ATP synthase subunit b, chloroplastic.